The chain runs to 1948 residues: [F-actin]-monooxygenase MICAL2 (1948 aa).

The segment at 2–494 (GENEDEKQAQ…KHLYITKEMD (493 aa)) is monooxygenase domain. FAD is bound by residues Cys-97, 116 to 118 (EKR), 123 to 125 (RNN), Phe-183, Tyr-298, and Asp-398. The region spanning 516-619 (DIRPNKLLTW…MVMYLSKFYE (104 aa)) is the Calponin-homology (CH) domain. Ser-631 is subject to Phosphoserine. The Nuclear localization signal motif lies at 660 to 681 (RKRTPRVDAQTEENDVNKRRRQ). Disordered stretches follow at residues 664 to 709 (PRVD…ESGN), 753 to 776 (SRPP…PPLK), and 891 to 923 (KRVP…DSVS). Polar residues predominate over residues 693–709 (SSRSLGSSQEYAKESGN). Over residues 896 to 917 (AHPPSPPSCLPSPDPAAAPSPP) the composition is skewed to pro residues. In terms of domain architecture, LIM zinc-binding spans 980–1042 (DTCYFCKKRV…KLHFAHCKTS (63 aa)). Residues Cys-982, Cys-985, His-1003, Cys-1006, Cys-1009, Cys-1012, Cys-1032, and His-1035 each contribute to the Zn(2+) site. Disordered regions lie at residues 1045–1134 (QRKR…GQDG), 1146–1185 (SEDS…QPLT), and 1233–1298 (QSNS…DDVS). Residues 1050-1059 (AELNQQREEE) are compositionally biased toward basic and acidic residues. Over residues 1233-1243 (QSNSTPMNQRA) the composition is skewed to polar residues. A compositionally biased stretch (low complexity) spans 1254–1271 (SSSSSPSLPSSFSSASVP). Residues 1277–1292 (DSSSPQVTYNLHSPQI) are compositionally biased toward polar residues. The segment at 1300–1339 (TPIYLRRARAQGITKEIPLYLPHSPMLESTEHCLVSPDGE) is interaction with MAPK1. Disordered regions lie at residues 1478–1505 (QKKA…KSPL), 1519–1622 (SSEA…SSKV), 1672–1726 (GDFF…QAGK), and 1739–1767 (SGPG…QLSS). Basic and acidic residues predominate over residues 1522 to 1534 (AGKKTSSKPETKT). Residues 1570-1579 (KASAFFSLAS) are compositionally biased toward low complexity. Residues 1580 to 1591 (PTSKAAQASDLS) show a composition bias toward polar residues. Residues 1672 to 1682 (GDFFNSPKEKG) show a composition bias toward basic and acidic residues. Ser-1677 carries the phosphoserine modification. 2 stretches are compositionally biased toward polar residues: residues 1698–1715 (VDST…TGQD) and 1747–1756 (EDTSSPTSSS). The bMERB domain maps to 1786-1936 (KQEELKRLHK…ERTQDQHFEN (151 aa)).

The protein belongs to the Mical family. Interacts with PLXNA4. Interacts with RAB1B. Interacts with MAPK1/ERK2. Interacts with RAB35, RAB8A, RAB10, RAB13 and RAB15 (in their GTP-bound forms); binding to RAB35 is of low affinity compared to other Rab proteins; at least in case of RAB8A may bind 2 molecules of RAB8A simultaneously through a high and a low affinity binding site, respectively. May interact with MAPK1/ERK2. Requires FAD as cofactor.

The protein resides in the nucleus. Its subcellular location is the cytoplasm. The enzyme catalyses L-methionyl-[F-actin] + NADPH + O2 + H(+) = L-methionyl-(R)-S-oxide-[F-actin] + NADP(+) + H2O. In terms of biological role, methionine monooxygenase that promotes depolymerization of F-actin by mediating oxidation of residues 'Met-44' and 'Met-47' on actin to form methionine-sulfoxide, resulting in actin filament disassembly and preventing repolymerization. Regulates the disassembly of branched actin networks also by oxidizing ARP3B-containing ARP2/3 complexes leading to ARP3B dissociation from the network. Acts as a key regulator of the SRF signaling pathway elicited by nerve growth factor and serum: mediates oxidation and subsequent depolymerization of nuclear actin, leading to increase MKL1/MRTF-A presence in the nucleus and promote SRF:MKL1/MRTF-A-dependent gene transcription. Does not activate SRF:MKL1/MRTF-A through RhoA. This chain is [F-actin]-monooxygenase MICAL2, found in Rattus norvegicus (Rat).